A 193-amino-acid polypeptide reads, in one-letter code: Holliday junction branch migration complex subunit RuvA (193 aa).

Positions 1–64 (MIGRIAGTLI…EDAHLLYGFG (64 aa)) are domain I. The domain II stretch occupies residues 65–143 (TAAERETFRQ…ADLGTVPGGP (79 aa)). A flexible linker region spans residues 144–151 (AVSDDAVD). The interval 151 to 193 (DVLNALLALGYSDKEAALAIKQVPAGTGVSEGIKLALKALSKG) is domain III.

Belongs to the RuvA family. As to quaternary structure, homotetramer. Forms an RuvA(8)-RuvB(12)-Holliday junction (HJ) complex. HJ DNA is sandwiched between 2 RuvA tetramers; dsDNA enters through RuvA and exits via RuvB. An RuvB hexamer assembles on each DNA strand where it exits the tetramer. Each RuvB hexamer is contacted by two RuvA subunits (via domain III) on 2 adjacent RuvB subunits; this complex drives branch migration. In the full resolvosome a probable DNA-RuvA(4)-RuvB(12)-RuvC(2) complex forms which resolves the HJ.

The protein resides in the cytoplasm. Its function is as follows. The RuvA-RuvB-RuvC complex processes Holliday junction (HJ) DNA during genetic recombination and DNA repair, while the RuvA-RuvB complex plays an important role in the rescue of blocked DNA replication forks via replication fork reversal (RFR). RuvA specifically binds to HJ cruciform DNA, conferring on it an open structure. The RuvB hexamer acts as an ATP-dependent pump, pulling dsDNA into and through the RuvAB complex. HJ branch migration allows RuvC to scan DNA until it finds its consensus sequence, where it cleaves and resolves the cruciform DNA. In Ralstonia pickettii (strain 12J), this protein is Holliday junction branch migration complex subunit RuvA.